The primary structure comprises 425 residues: Imidazolonepropionase (425 aa).

Fe(3+)-binding residues include histidine 82 and histidine 84. Histidine 82 and histidine 84 together coordinate Zn(2+). Residues arginine 91, tyrosine 154, and histidine 187 each contribute to the 4-imidazolone-5-propanoate site. Tyrosine 154 serves as a coordination point for N-formimidoyl-L-glutamate. Histidine 253 is a binding site for Fe(3+). Histidine 253 serves as a coordination point for Zn(2+). Glutamate 256 serves as a coordination point for 4-imidazolone-5-propanoate. Aspartate 328 is a binding site for Fe(3+). Aspartate 328 is a Zn(2+) binding site. N-formimidoyl-L-glutamate-binding residues include asparagine 330 and glycine 332. Serine 333 contributes to the 4-imidazolone-5-propanoate binding site.

It belongs to the metallo-dependent hydrolases superfamily. HutI family. The cofactor is Zn(2+). It depends on Fe(3+) as a cofactor.

It is found in the cytoplasm. The catalysed reaction is 4-imidazolone-5-propanoate + H2O = N-formimidoyl-L-glutamate. The protein operates within amino-acid degradation; L-histidine degradation into L-glutamate; N-formimidoyl-L-glutamate from L-histidine: step 3/3. Its function is as follows. Catalyzes the hydrolytic cleavage of the carbon-nitrogen bond in imidazolone-5-propanoate to yield N-formimidoyl-L-glutamate. It is the third step in the universal histidine degradation pathway. The polypeptide is Imidazolonepropionase (Symbiobacterium thermophilum (strain DSM 24528 / JCM 14929 / IAM 14863 / T)).